We begin with the raw amino-acid sequence, 69 residues long: uncharacterized protein (69 aa).

A coiled-coil region spans residues 21 to 64 (LNLLKGGEEKISEVELKLDEMEKKMDSLLVQLEDLHRDNNDLAK).

This is an uncharacterized protein from Saccharomyces cerevisiae (strain ATCC 204508 / S288c) (Baker's yeast).